A 456-amino-acid polypeptide reads, in one-letter code: Probable hexose phosphate transport protein (456 aa).

The next 11 helical transmembrane spans lie at I34–F54, L70–V90, I113–W133, V161–I181, G185–I205, Y257–V277, L302–S322, G331–T351, A362–A382, A394–G414, and G421–L441.

The protein belongs to the major facilitator superfamily. Organophosphate:Pi antiporter (OPA) (TC 2.A.1.4) family.

It localises to the cell membrane. Functionally, transport protein for sugar phosphate uptake. The polypeptide is Probable hexose phosphate transport protein (Chlamydia muridarum (strain MoPn / Nigg)).